The chain runs to 430 residues: Probable histidine--tRNA ligase, cytoplasmic (430 aa).

This sequence belongs to the class-II aminoacyl-tRNA synthetase family.

Its subcellular location is the cytoplasm. It carries out the reaction tRNA(His) + L-histidine + ATP = L-histidyl-tRNA(His) + AMP + diphosphate + H(+). This chain is Probable histidine--tRNA ligase, cytoplasmic, found in Vairimorpha ceranae (strain BRL01) (Microsporidian parasite).